The sequence spans 318 residues: MLHLIYISIIVVLIIILISYTRKPQYFRITAPRSVALFHGIHPLNPKNYKTFSEEFETILNNAIEDGDFKGQLTEPCSYALRGGKYIRPIILMEIVRACQLQHSFGAPIYPAEAALAVEYFHVASLIIDDMPSFDNDVKRRNKDTVWARFGVAKAQMSALALTMQGFQNICRQVDWIKENCPRFPDPNQLGALLCTFVSHSLNSAGSGQLVDTPEKTIPFFKIAFIMGWVLGTGTIEDIGAIERAAHCFGNAFQLADDIKDHDTDTGRNYAKIHGKRKTFDVVAQSLQECKKILHEKKIYTSIWNEIFQKVINVALGT.

A helical membrane pass occupies residues 1 to 21 (MLHLIYISIIVVLIIILISYT). Positions 85, 88, and 122 each coordinate isopentenyl diphosphate. D129 and D135 together coordinate Mg(2+). A dimethylallyl diphosphate-binding site is contributed by R140. R141 contacts isopentenyl diphosphate. Residues K216, T217, and Q254 each coordinate dimethylallyl diphosphate.

It belongs to the FPP/GGPP synthase family. Asfivirus trans-prenyltransferase subfamily. It depends on Mg(2+) as a cofactor.

Its subcellular location is the host endoplasmic reticulum. The protein resides in the host membrane. It catalyses the reaction isopentenyl diphosphate + dimethylallyl diphosphate = (2E)-geranyl diphosphate + diphosphate. The catalysed reaction is isopentenyl diphosphate + (2E)-geranyl diphosphate = (2E,6E)-farnesyl diphosphate + diphosphate. The enzyme catalyses isopentenyl diphosphate + (2E,6E)-farnesyl diphosphate = (2E,6E,10E)-geranylgeranyl diphosphate + diphosphate. It carries out the reaction isopentenyl diphosphate + (2E,6E,10E)-geranylgeranyl diphosphate = (2E,6E,10E,14E)-geranylfarnesyl diphosphate + diphosphate. It functions in the pathway isoprenoid biosynthesis; farnesyl diphosphate biosynthesis; farnesyl diphosphate from geranyl diphosphate and isopentenyl diphosphate: step 1/1. It participates in isoprenoid biosynthesis; geranyl diphosphate biosynthesis; geranyl diphosphate from dimethylallyl diphosphate and isopentenyl diphosphate: step 1/1. Its pathway is isoprenoid biosynthesis; geranylgeranyl diphosphate biosynthesis; geranylgeranyl diphosphate from farnesyl diphosphate and isopentenyl diphosphate: step 1/1. Trans-prenyltransferase that catalyzes the sequential condensation of isopentenyl diphosphate (IPP) with different allylic diphosphates, such as dimethylallyl diphosphate (DMAPP), geranyl diphosphate (GPP), farnesyl diphosphate (FPP) and geranylgeranyl diphosphate (GGPP), farnesyl diphosphate being the best allylic substrate. In Ornithodoros (relapsing fever ticks), this protein is Trans-prenyltransferase.